A 58-amino-acid polypeptide reads, in one-letter code: Putative antitoxin VapB16 (58 aa).

Functionally, putative antitoxin component of a possible type II toxin-antitoxin (TA) system. The cognate toxin is VapC16. The protein is Putative antitoxin VapB16 (vapB16) of Mycobacterium tuberculosis (strain ATCC 25618 / H37Rv).